The primary structure comprises 206 residues: Large ribosomal subunit protein uL3 (206 aa).

Belongs to the universal ribosomal protein uL3 family. Part of the 50S ribosomal subunit. Forms a cluster with proteins L14 and L19.

Its function is as follows. One of the primary rRNA binding proteins, it binds directly near the 3'-end of the 23S rRNA, where it nucleates assembly of the 50S subunit. The protein is Large ribosomal subunit protein uL3 of Thermus thermophilus (strain ATCC BAA-163 / DSM 7039 / HB27).